A 255-amino-acid chain; its full sequence is Vitamin B12 import ATP-binding protein BtuD (255 aa).

The ABC transporter domain occupies 2–240; that stretch reads MHVKHIALGS…EGLAEVFQTQ (239 aa). 30–37 contacts ATP; the sequence is GPNGSGKS.

This sequence belongs to the ABC transporter superfamily. Vitamin B12 importer (TC 3.A.1.13.1) family. As to quaternary structure, the complex is composed of two ATP-binding proteins (BtuD), two transmembrane proteins (BtuC) and a solute-binding protein (BtuF).

It localises to the cell inner membrane. It catalyses the reaction an R-cob(III)alamin(out) + ATP + H2O = an R-cob(III)alamin(in) + ADP + phosphate + H(+). In terms of biological role, part of the ABC transporter complex BtuCDF involved in vitamin B12 import. Responsible for energy coupling to the transport system. This is Vitamin B12 import ATP-binding protein BtuD from Vibrio campbellii (strain ATCC BAA-1116).